The primary structure comprises 218 residues: DNA-directed RNA polymerases IV and V subunit 5B (218 aa).

The protein belongs to the archaeal Rpo5/eukaryotic RPB5 RNA polymerase subunit family. Component of the RNA polymerase IV and V complexes. Interacts with NRPD1. As to expression, expressed inleaves, flower buds, flowers and siliques.

Its subcellular location is the nucleus. Functionally, DNA-dependent RNA polymerase catalyzes the transcription of DNA into RNA using the four ribonucleoside triphosphates as substrates. Component of RNA polymerases IV and V which mediate short-interfering RNAs (siRNA) accumulation and subsequent RNA-directed DNA methylation-dependent (RdDM) transcriptional gene silencing (TGS) of endogenous repeated sequences, including transposable elements. The sequence is that of DNA-directed RNA polymerases IV and V subunit 5B (NRPD5B) from Arabidopsis thaliana (Mouse-ear cress).